We begin with the raw amino-acid sequence, 331 residues long: D-aspartate oxidase 2 (331 aa).

Residues aspartate 35, lysine 36, serine 43, and glycine 307 each contribute to the FAD site.

The protein belongs to the DAMOX/DASOX family. It depends on FAD as a cofactor.

It localises to the cytoplasm. The catalysed reaction is D-aspartate + O2 + H2O = oxaloacetate + H2O2 + NH4(+). The enzyme catalyses D-glutamate + O2 + H2O = H2O2 + 2-oxoglutarate + NH4(+). Its function is as follows. Selectively catalyzes the oxidative deamination of acidic amino acids. May play a role in the egg-laying events and early development of the worm, in addition to quality control of the germ cells. This chain is D-aspartate oxidase 2, found in Caenorhabditis briggsae.